The following is a 258-amino-acid chain: UPF0246 protein YaaA (258 aa).

Belongs to the UPF0246 family.

This is UPF0246 protein YaaA from Escherichia coli O6:K15:H31 (strain 536 / UPEC).